The primary structure comprises 261 residues: uncharacterized protein (261 aa).

This sequence belongs to the PaiB family.

This is an uncharacterized protein from Aspergillus fumigatus (strain ATCC MYA-4609 / CBS 101355 / FGSC A1100 / Af293) (Neosartorya fumigata).